Reading from the N-terminus, the 249-residue chain is 2,3-bisphosphoglycerate-dependent phosphoglycerate mutase (249 aa).

Substrate-binding positions include 9–16 (RHGQSQWN), 22–23 (TG), Arg61, 88–91 (ERHY), Lys99, 115–116 (RR), and 184–185 (GN). The active-site Tele-phosphohistidine intermediate is His10. The Proton donor/acceptor role is filled by Glu88.

It belongs to the phosphoglycerate mutase family. BPG-dependent PGAM subfamily. As to quaternary structure, homodimer.

The enzyme catalyses (2R)-2-phosphoglycerate = (2R)-3-phosphoglycerate. It functions in the pathway carbohydrate degradation; glycolysis; pyruvate from D-glyceraldehyde 3-phosphate: step 3/5. Its function is as follows. Catalyzes the interconversion of 2-phosphoglycerate and 3-phosphoglycerate. In Xylella fastidiosa (strain M23), this protein is 2,3-bisphosphoglycerate-dependent phosphoglycerate mutase.